A 376-amino-acid chain; its full sequence is 5-amino-6-(D-ribitylamino)uracil--L-tyrosine 4-hydroxyphenyl transferase 1 (376 aa).

A Radical SAM core domain is found at 50-275; it reads VTYVVNRNIN…PGLEDLKVYA (226 aa). Residues Cys64, Cys68, and Cys71 each contribute to the [4Fe-4S] cluster site.

This sequence belongs to the radical SAM superfamily. CofH family. In terms of assembly, consists of two subunits, CofG and CofH. It depends on [4Fe-4S] cluster as a cofactor.

The catalysed reaction is 5-amino-6-(D-ribitylamino)uracil + L-tyrosine + S-adenosyl-L-methionine = 5-amino-5-(4-hydroxybenzyl)-6-(D-ribitylimino)-5,6-dihydrouracil + 2-iminoacetate + 5'-deoxyadenosine + L-methionine + H(+). It functions in the pathway cofactor biosynthesis; coenzyme F0 biosynthesis. Its function is as follows. Catalyzes the radical-mediated synthesis of 5-amino-5-(4-hydroxybenzyl)-6-(D-ribitylimino)-5,6-dihydrouracil from 5-amino-6-(D-ribitylamino)uracil and L-tyrosine. The chain is 5-amino-6-(D-ribitylamino)uracil--L-tyrosine 4-hydroxyphenyl transferase 1 from Methanosarcina mazei (strain ATCC BAA-159 / DSM 3647 / Goe1 / Go1 / JCM 11833 / OCM 88) (Methanosarcina frisia).